The following is a 313-amino-acid chain: Dehydrogenase/reductase SDR family member 1 (313 aa).

Ile19 provides a ligand contact to NAD(+). Omega-N-methylarginine is present on Arg21. Asp64 contacts NAD(+). Residue Ser151 participates in substrate binding. Residues Tyr163, Lys167, and Thr198 each contribute to the NAD(+) site. The active-site Proton acceptor is Tyr163.

The protein belongs to the short-chain dehydrogenases/reductases (SDR) family.

It localises to the endoplasmic reticulum. It carries out the reaction 17alpha-estradiol + NADP(+) = estrone + NADPH + H(+). It catalyses the reaction testosterone + NADP(+) = androst-4-ene-3,17-dione + NADPH + H(+). The catalysed reaction is prostaglandin E1 + NADPH + H(+) = prostaglandin F1 + NADP(+). The enzyme catalyses isatin + NADPH + H(+) = 3-hydroxyindolin-2-one + NADP(+). NADPH-dependent oxidoreductase which catalyzes the reduction of some steroids (estrone, androstene-3,17-dione and cortisone) as well as prostaglandin E1, isatin and xenobiotics in vitro. May have a role in steroid and/or xenobiotic metabolism. This is Dehydrogenase/reductase SDR family member 1 from Mus musculus (Mouse).